The following is an 898-amino-acid chain: Pyruvate, phosphate dikinase (898 aa).

The N-terminal stretch occupies residues 1-355; that stretch reads MAKWVYTFGA…LWMLQTRSGK (355 aa). Arginine 96 contributes to the ATP binding site. The interval 356-412 is linker 1; sequence RTAKSALKIAVDMAEEGLISKEEAVARIDPASLDQLLHPTIDPHARRDIIGSGLPAS. A central region spans residues 413-511; the sequence is PGAATGEIVF…TLRKGDVITI (99 aa). The residue at position 466 (threonine 466) is a Phosphothreonine; by PDRP1. The active-site Tele-phosphohistidine intermediate is the histidine 468. The interval 512–546 is linker 2; sequence DGSSGQVLKGEIPMLQPELSGDFGKIMQWADASRR. The tract at residues 547–898 is C-terminal; it reads MTVRTNAETP…VAEVQALAAS (352 aa). The substrate site is built by arginine 574, arginine 630, glutamate 758, glycine 779, threonine 780, asparagine 781, and aspartate 782. Glutamate 758 serves as a coordination point for Mg(2+). Aspartate 782 contacts Mg(2+). Cysteine 844 (proton donor) is an active-site residue.

It belongs to the PEP-utilizing enzyme family. Homodimer. Mg(2+) is required as a cofactor. In terms of processing, phosphorylation of Thr-466 in the dark inactivates the enzyme. Dephosphorylation upon light stimulation reactivates the enzyme.

It carries out the reaction pyruvate + phosphate + ATP = phosphoenolpyruvate + AMP + diphosphate + H(+). Activated by light-induced dephosphorylation. Inhibited by dark-induced phosphorylation. Both reactions are catalyzed by PDRP1. Catalyzes the reversible phosphorylation of pyruvate and phosphate. This chain is Pyruvate, phosphate dikinase (ppdK), found in Rhizobium meliloti (strain 1021) (Ensifer meliloti).